Consider the following 259-residue polypeptide: Adenosylcobinamide-GDP ribazoletransferase (259 aa).

6 consecutive transmembrane segments (helical) span residues 37-57, 58-78, 118-138, 143-163, 195-215, and 237-257; these read ASRY…LVYS, VMLH…ASVL, ALAL…LALF, VSLA…SFIF, AAIS…LGLL, and LGAT…IVGA.

This sequence belongs to the CobS family. The cofactor is Mg(2+).

Its subcellular location is the cell inner membrane. The enzyme catalyses alpha-ribazole + adenosylcob(III)inamide-GDP = adenosylcob(III)alamin + GMP + H(+). It carries out the reaction alpha-ribazole 5'-phosphate + adenosylcob(III)inamide-GDP = adenosylcob(III)alamin 5'-phosphate + GMP + H(+). Its pathway is cofactor biosynthesis; adenosylcobalamin biosynthesis; adenosylcobalamin from cob(II)yrinate a,c-diamide: step 7/7. Functionally, joins adenosylcobinamide-GDP and alpha-ribazole to generate adenosylcobalamin (Ado-cobalamin). Also synthesizes adenosylcobalamin 5'-phosphate from adenosylcobinamide-GDP and alpha-ribazole 5'-phosphate. The chain is Adenosylcobinamide-GDP ribazoletransferase from Shewanella piezotolerans (strain WP3 / JCM 13877).